The chain runs to 278 residues: MGTNDALTSTEDAVTAGANDAPLPAPPEPPRKARRATSRTSDFRVAEQPAYVLHSYPYRETSLIIDVLTRDHGRLALVAKGAKRPHSALRGVLQTFQPLLLSWSGKSEVRTLTGAEWVGGMLPLGGDGLLCGFYANELLVKFCAREDPQPPLFNHYVLTLTRLAHGEPAVQVLRSFERVLLRETGYAMALNRTVARRAVEPDRRYVFDPERGVRNADDEVPSHWPVISGQTLLDMEQDDYHRAQTVAQSKTLMRFLLNTYLGGTPLATRQILIDLQNL.

Polar residues predominate over residues 1–12; sequence MGTNDALTSTED. Positions 1–42 are disordered; that stretch reads MGTNDALTSTEDAVTAGANDAPLPAPPEPPRKARRATSRTSD.

Belongs to the RecO family.

In terms of biological role, involved in DNA repair and RecF pathway recombination. This chain is DNA repair protein RecO, found in Burkholderia lata (strain ATCC 17760 / DSM 23089 / LMG 22485 / NCIMB 9086 / R18194 / 383).